We begin with the raw amino-acid sequence, 239 residues long: Retrotransposon Gag-like protein 6 (239 aa).

Residues 29-69 (LTSLRLTNSALRREASTLRAEKANLTNMLESVMAELTLLRT) are a coiled coil. Positions 82–94 (PISSITSNGTRPM) are enriched in polar residues. 2 disordered regions span residues 82-106 (PISS…EPFS) and 214-239 (TGPC…ARNL). Residues 228 to 239 (PAPALPARARNL) are compositionally biased toward low complexity.

It belongs to the LDOC1 family.

This Homo sapiens (Human) protein is Retrotransposon Gag-like protein 6.